Here is a 434-residue protein sequence, read N- to C-terminus: CCA tRNA nucleotidyltransferase 1, mitochondrial (434 aa).

The transit peptide at 1–41 (MQSVLYPWHRQVLRCSWSRLCLLKRYLFTMKLQSPEFQSLF) directs the protein to the mitochondrion. Positions 64 and 67 each coordinate ATP. CTP-binding residues include Gly64 and Arg67. Mg(2+)-binding residues include Asp77 and Asp79. ATP-binding residues include Arg151, Asp194, Arg197, Arg200, and Arg203. CTP-binding residues include Arg151, Asp194, Arg197, Arg200, and Arg203. At Ser400 the chain carries Phosphoserine. Lys402 carries the post-translational modification N6-acetyllysine.

This sequence belongs to the tRNA nucleotidyltransferase/poly(A) polymerase family. As to quaternary structure, monomer, and homodimer. Requires Mg(2+) as cofactor.

Its subcellular location is the mitochondrion. The protein resides in the cytoplasm. It localises to the nucleus. It carries out the reaction a tRNA precursor + 2 CTP + ATP = a tRNA with a 3' CCA end + 3 diphosphate. The enzyme catalyses a tRNA with a 3' CCA end + 2 CTP + ATP = a tRNA with a 3' CCACCA end + 3 diphosphate. Its function is as follows. Nucleotidyltransferase that catalyzes the addition and repair of the essential 3'-terminal CCA sequence in tRNAs, which is necessary for the attachment of amino acids to the 3' terminus of tRNA molecules, using CTP and ATP as substrates. tRNA 3'-terminal CCA addition is required both for tRNA processing and repair. Promotes tRNA repair and recycling downstream of the ribosome-associated quality control (RQC) pathway by mediating addition of the tRNA 3'-terminal CCA following cleavage by ANKZF1 and repair by ELAC1. Also involved in tRNA surveillance by mediating tandem CCA addition to generate a CCACCA at the 3' terminus of unstable tRNAs and tRNA-like transcripts. While stable tRNAs receive only 3'-terminal CCA, unstable tRNAs beginning with GG are marked with CCACCA and rapidly degraded. The structural flexibility of RNA controls the choice between CCA versus CCACCA addition: following the first CCA addition cycle, nucleotide-binding to the active site triggers a clockwise screw motion, producing torque on the RNA. This ejects stable RNAs, whereas unstable RNAs are refolded while bound to the enzyme and subjected to a second CCA catalytic cycle. The protein is CCA tRNA nucleotidyltransferase 1, mitochondrial (Trnt1) of Mus musculus (Mouse).